Consider the following 183-residue polypeptide: Hypoxanthine/guanine phosphoribosyltransferase (183 aa).

It belongs to the purine/pyrimidine phosphoribosyltransferase family. Archaeal HPRT subfamily. In terms of assembly, homodimer.

Its subcellular location is the cytoplasm. It catalyses the reaction IMP + diphosphate = hypoxanthine + 5-phospho-alpha-D-ribose 1-diphosphate. The catalysed reaction is GMP + diphosphate = guanine + 5-phospho-alpha-D-ribose 1-diphosphate. The protein operates within purine metabolism; IMP biosynthesis via salvage pathway; IMP from hypoxanthine: step 1/1. In terms of biological role, catalyzes a salvage reaction resulting in the formation of IMP that is energically less costly than de novo synthesis. The chain is Hypoxanthine/guanine phosphoribosyltransferase from Methanothermococcus okinawensis (strain DSM 14208 / JCM 11175 / IH1).